The primary structure comprises 152 residues: Small ribosomal subunit protein bS16 (152 aa).

Residues 84–152 (WKWEASNNPQ…EAAAEEEKSE (69 aa)) are disordered. Positions 97–123 (PGQKAKELAAEKAEKEADRKAAEEEAK) are enriched in basic and acidic residues. Low complexity predominate over residues 124 to 144 (AAAAAPAAEEAPAEEAPAAEA).

Belongs to the bacterial ribosomal protein bS16 family.

The chain is Small ribosomal subunit protein bS16 from Maricaulis maris (strain MCS10) (Caulobacter maris).